The primary structure comprises 256 residues: Proteasome subunit beta type-5 (256 aa).

Residues 1–55 (CNMALADIVRLPPASEAPFAPLGAPRDLSGPPSKLAVRPWGGADLPGPGLQLLHG) constitute a propeptide, removed in mature form. T56 functions as the Nucleophile in the catalytic mechanism.

This sequence belongs to the peptidase T1B family. As to quaternary structure, the 26S proteasome consists of a 20S proteasome core and two 19S regulatory subunits. The 20S proteasome core is a barrel-shaped complex made of 28 subunits that are arranged in four stacked rings. The two outer rings are each formed by seven alpha subunits, and the two inner rings are formed by seven beta subunits. The proteolytic activity is exerted by three beta-subunits PSMB5, PSMB6 and PSMB7. Directly interacts with POMP. Interacts with ABCB1 and TAP1.

The protein resides in the cytoplasm. The protein localises to the nucleus. It carries out the reaction Cleavage of peptide bonds with very broad specificity.. In terms of biological role, component of the 20S core proteasome complex involved in the proteolytic degradation of most intracellular proteins. This complex plays numerous essential roles within the cell by associating with different regulatory particles. Associated with two 19S regulatory particles, forms the 26S proteasome and thus participates in the ATP-dependent degradation of ubiquitinated proteins. The 26S proteasome plays a key role in the maintenance of protein homeostasis by removing misfolded or damaged proteins that could impair cellular functions, and by removing proteins whose functions are no longer required. Associated with the PA200 or PA28, the 20S proteasome mediates ubiquitin-independent protein degradation. This type of proteolysis is required in several pathways including spermatogenesis (20S-PA200 complex) or generation of a subset of MHC class I-presented antigenic peptides (20S-PA28 complex). Within the 20S core complex, PSMB5 displays a chymotrypsin-like activity. The polypeptide is Proteasome subunit beta type-5 (PSMB5) (Gallus gallus (Chicken)).